The following is a 278-amino-acid chain: HTH-type transcriptional activator RhaS (278 aa).

The HTH araC/xylS-type domain occupies 174 to 272 (NQLMAWLEDH…NWSPRDIRQG (99 aa)). 2 DNA-binding regions (H-T-H motif) span residues 191 to 212 (EAVA…KQHT) and 239 to 262 (VTEI…RREF).

In terms of assembly, binds DNA as a dimer.

It localises to the cytoplasm. Its function is as follows. Activates expression of the rhaBAD and rhaT operons. The chain is HTH-type transcriptional activator RhaS from Salmonella arizonae (strain ATCC BAA-731 / CDC346-86 / RSK2980).